A 919-amino-acid chain; its full sequence is UPF0182 protein SUN_1015 (919 aa).

A run of 7 helical transmembrane segments spans residues 8–28 (IIIT…VDYY), 51–71 (ILSF…HIHF), 102–122 (AVAW…GSYA), 158–178 (VYQF…IGVL), 207–227 (LTAF…YNIL), 246–266 (IPAY…LFFY), and 274–294 (VIVS…WIYP).

This sequence belongs to the UPF0182 family.

The protein resides in the cell membrane. The chain is UPF0182 protein SUN_1015 from Sulfurovum sp. (strain NBC37-1).